The chain runs to 135 residues: DNA-directed RNA polymerase subunit omega (135 aa).

Residues 84 to 106 (IAGHSSHVSPSRSSRHTGLGKSF) form a disordered region.

Belongs to the RNA polymerase subunit omega family. In terms of assembly, the RNAP catalytic core consists of 2 alpha, 1 beta, 1 beta' and 1 omega subunit. When a sigma factor is associated with the core the holoenzyme is formed, which can initiate transcription.

It carries out the reaction RNA(n) + a ribonucleoside 5'-triphosphate = RNA(n+1) + diphosphate. Its function is as follows. Promotes RNA polymerase assembly. Latches the N- and C-terminal regions of the beta' subunit thereby facilitating its interaction with the beta and alpha subunits. The chain is DNA-directed RNA polymerase subunit omega from Anaplasma phagocytophilum (strain HZ).